We begin with the raw amino-acid sequence, 2286 residues long: Non-reducing polyketide synthase fsr1 (2286 aa).

Positions 7–342 (LYLFGDQTFD…IYTALKKTSL (336 aa)) are N-terminal acylcarrier protein transacylase domain (SAT). The Ketosynthase family 3 (KS3) domain maps to 368-805 (KPKLAIVAMS…GGNSALLIQD (438 aa)). Residues C540, H675, and H722 each act as for beta-ketoacyl synthase activity in the active site. Positions 905-1195 (VFTFTGQGAQ…GMVKPTLGQQ (291 aa)) are acyl/malonyl transferases. The active-site For acyl/malonyl transferase activity is S996. The segment at 1285–1417 (HSVVEESGDS…CVVLFKDRSH (133 aa)) is N-terminal hotdog fold. The PKS/mFAS DH domain occupies 1285–1591 (HSVVEESGDS…IQGVPRRVLK (307 aa)). The interval 1296–1588 (KTGIVVEADI…QIAIQGVPRR (293 aa)) is product template (PT) domainn. H1317 acts as the Proton acceptor; for dehydratase activity in catalysis. Residues 1444–1591 (SARFNRPMAY…IQGVPRRVLK (148 aa)) are C-terminal hotdog fold. The active-site Proton donor; for dehydratase activity is the D1504. The disordered stretch occupies residues 1600 to 1639 (KKGQPQRQTQDKPRNTPSQTKDSTPKPAQNKPAAKVEPPK). A Carrier 1 domain is found at 1637–1712 (PPKFSTAIRI…DLRAFLGADE (76 aa)). At S1671 the chain carries O-(pantetheine 4'-phosphoryl)serine. The disordered stretch occupies residues 1716 to 1735 (ESSSSAASDSGRDTTTTGSA). Residues 1748-1823 (EVEFERALEI…DLKTMLAREM (76 aa)) enclose the Carrier 2 domain. S1782 carries the O-(pantetheine 4'-phosphoryl)serine modification. The segment at 1897-2145 (VTGASGGLGS…NWTPVNDIAD (249 aa)) is reductase (R) domain.

It functions in the pathway polyketide biosynthesis. Non-reducing polyketide synthase; part of the gene cluster that mediates the biosynthesis of fusarubins, highly pigmented naphthoquinones responsible for the coloration of the fruiting bodies. The non-reducing polyketide synthase FSR1 is responsible for the condensation of seven acetyl-CoA units to yield a haptaketide. After rings A and B are formed by aldol-type cyclization, the PKS-derived product is released as 6-O-demethylfusarubinaldehyde. Then, two hydroxyl groups at C-5 and C-10 are incorporated by FSR3, and simultaneously hydroxyl groups at C-6 and C-8 are methylated by FSR2. The aldehyde is, on the one hand, reduced by FSR3 to 8-O-methylfusarubin alcohol, which equilibrates mainly with 8-O-methylfusarubin and only small amounts of 8-O-methylnectriafurone. On the other hand, the aldehyde can be oxidized to form 8-O-methylfusarubinic acid, a reaction driven by FSR3 equilibrating with 8-O-methylfusarubinlactone, finally resulting in 8-O-methylanhydrofusarubinlactol after a further reduction step and loss of water. 8-O-Methylfusarubinic acid can also undergo decarboxylation, resulting in 8-O-methyl-13-hydroxynorjavanicin after another hydroxylation step at C-13. Both steps are most likely also accomplished by FSR3. No enzymatic function has been determined so far for either FSR4 and FSR5. Their deletion does not alter the product spectrum, but the possibility that they catalyze specific enzymatic steps during perithecium development cannot be ruled out. FSR4 might possess a regulatory function in the biosynthesis of fusarubins. This is Non-reducing polyketide synthase fsr1 from Gibberella fujikuroi (strain CBS 195.34 / IMI 58289 / NRRL A-6831) (Bakanae and foot rot disease fungus).